We begin with the raw amino-acid sequence, 134 residues long: uncharacterized protein (134 aa).

3 consecutive transmembrane segments (helical) span residues 8–28 (FTSL…TVMY), 54–74 (GFQA…TFLL), and 113–133 (LACF…RLVD).

It belongs to the cornichon family.

It localises to the endoplasmic reticulum membrane. This is an uncharacterized protein from Schizosaccharomyces pombe (strain 972 / ATCC 24843) (Fission yeast).